The chain runs to 421 residues: Putative zinc finger protein R05D3.3 (421 aa).

C2H2-type zinc fingers lie at residues 207-228 (VLCV…IEAH) and 234-257 (YKCS…RTQH). The tract at residues 400–421 (GSSITDSNEPGPSEIKKELAEV) is disordered.

It localises to the nucleus. This chain is Putative zinc finger protein R05D3.3, found in Caenorhabditis elegans.